A 694-amino-acid polypeptide reads, in one-letter code: MATPLKLYRNIGIAAHVDAGKTTTTERVLYYTGMSHKIGEVHDGAATMDWMVQEQERGITITSAATTCYWSGMDKQFESHRINIIDTPGHVDFMIEVERSLRVLDGAVVVFDSVAGVEPQSETVWRQANKYGVPRIVFVNKMDRMGANFLRVVSQIKQRLGSTPVVLQLPIGAEEEFKGVIDLIKMKAIHWDEENKGMTFKYVDIPADLKATCEEYRAHIIEAAAEYSEELMEKYLEGEEFTEAEIKKALRHLTITNKVVPVFCGSAFKNKGVQAVLDGVIEYLPSPTDIPDIQGVDEHGDEIHRKTSYDEPFSALAFKIATDPFVGTLTYFRAYSGILKSGDTVYNSVKGKKERIGRLLQMHANSREEIKEVRAGDIAAAVGLKTVTTGDTLCDQDKVVILERMDFPDPVIAVAVEPKTKADQEKMGIALGKLAQEDPSFRVHTDEESGQTIIQGMGELHLEIIVDRMKREFNVEANVGKPQVAYRETLKQAVEQEGKFVRQSGGRGQYGHVWLKIEPQEPGKGYEFINAIVGGVIPKEYIPAVDKGIQEQMQNGVIAGYPVVDVKVTLFDGSFHEVDSSEMALKIAGSQCFKQGALKAKPVLLEPIMSVEVVTPEDYMGDVMGDLNRRRGLVQGMEDSPAGKIVRAEVPLAEMFGYSTDLRSATQGRATYTMEFCKYAEAPTNIAEAIIKKQ.

Residues 6-288 (KLYRNIGIAA…GVIEYLPSPT (283 aa)) form the tr-type G domain. GTP is bound by residues 15–22 (AHVDAGKT), 86–90 (DTPGH), and 140–143 (NKMD).

The protein belongs to the TRAFAC class translation factor GTPase superfamily. Classic translation factor GTPase family. EF-G/EF-2 subfamily.

Its subcellular location is the cytoplasm. In terms of biological role, catalyzes the GTP-dependent ribosomal translocation step during translation elongation. During this step, the ribosome changes from the pre-translocational (PRE) to the post-translocational (POST) state as the newly formed A-site-bound peptidyl-tRNA and P-site-bound deacylated tRNA move to the P and E sites, respectively. Catalyzes the coordinated movement of the two tRNA molecules, the mRNA and conformational changes in the ribosome. In Legionella pneumophila (strain Corby), this protein is Elongation factor G.